The primary structure comprises 356 residues: Glycerol-1-phosphate dehydrogenase [NAD(P)+] (356 aa).

Residues 103 to 107 (GRSID) and 125 to 128 (TAAS) each bind NAD(+). D130 serves as a coordination point for substrate. Residue S134 participates in NAD(+) binding. D177 is a binding site for substrate. The Zn(2+) site is built by D177 and H257. Residue H261 participates in substrate binding. Position 273 (H273) interacts with Zn(2+).

The protein belongs to the glycerol-1-phosphate dehydrogenase family. Zn(2+) serves as cofactor.

The protein resides in the cytoplasm. The catalysed reaction is sn-glycerol 1-phosphate + NAD(+) = dihydroxyacetone phosphate + NADH + H(+). The enzyme catalyses sn-glycerol 1-phosphate + NADP(+) = dihydroxyacetone phosphate + NADPH + H(+). It participates in membrane lipid metabolism; glycerophospholipid metabolism. In terms of biological role, catalyzes the NAD(P)H-dependent reduction of dihydroxyacetonephosphate (DHAP or glycerone phosphate) to glycerol 1-phosphate (G1P). The G1P thus generated is used as the glycerophosphate backbone of phospholipids in the cellular membranes of Archaea. The sequence is that of Glycerol-1-phosphate dehydrogenase [NAD(P)+] from Methanosarcina acetivorans (strain ATCC 35395 / DSM 2834 / JCM 12185 / C2A).